The primary structure comprises 1130 residues: Transmembrane channel-like protein 3 (1130 aa).

At 1-148 (MKTSKASQRY…ASYFIFLRWL (148 aa)) the chain is on the cytoplasmic side. Residues 149-169 (FGINIVLTVMTGAFVVLPELI) form a helical membrane-spanning segment. At 170-192 (AGQPFGSTASKTIPREQITSAQD) the chain is on the extracellular side. A helical membrane pass occupies residues 193–213 (LDTVWSLGGYLQYSVLFYGYY). At 214–225 (GRERRIGRAGYR) the chain is on the cytoplasmic side. A helical membrane pass occupies residues 226–246 (LPLAYFLVGMAVFAYSFIVLL). At 247-319 (KRMAKNSRTS…KNMAVTVCLR (73 aa)) the chain is on the extracellular side. N-linked (GlcNAc...) asparagine glycosylation is present at N264. Residues 320-340 (IIANILVLLSLAGSIYLIYFV) traverse the membrane as a helical segment. At 341-361 (VDRSQKLEQSKKELTLWEKNE) the chain is on the cytoplasmic side. Residues 362 to 382 (VSVVVSLVTMLAPSAFDLIAA) traverse the membrane as a helical segment. The Extracellular portion of the chain corresponds to 383–393 (LEMYHPRTTLR). The helical transmembrane segment at 394–414 (FQLARVLVLYLGNLYSLIIAL) threads the bilayer. Over 415 to 509 (LDKVNSMNIE…CWETYVGQEM (95 aa)) the chain is Cytoplasmic. The chain crosses the membrane as a helical span at residues 510–530 (LKLSVIDMLFTVASILLIDFF). Residues 531 to 570 (RGLFVRYLSDYWCWDLESKFPEYGEFKIAENVLHLVYNQG) lie on the Extracellular side of the membrane. Residues 571–591 (MIWMGAFFSPCLPAFNVLKLI) traverse the membrane as a helical segment. Over 592 to 619 (GLMYLRSWAVLTCNVPHQQVFRASRSNN) the chain is Cytoplasmic. Residues 620–640 (FYLAMLLFMLFLCMLPTIFAI) form a helical membrane-spanning segment. Residues 641–680 (VHYKPSLNCGPFSGQEKIYDIVSETIENDFPTWFHAVVGH) are Extracellular-facing. Residues 681-701 (ISSPVVILPAVLLLFMLIYYL) form a helical membrane-spanning segment. The Cytoplasmic segment spans residues 702–1130 (QSIARSLKLS…DLNDLICSNV (429 aa)). Disordered regions lie at residues 742–774 (DARQAGSATEAESSENSKPKTLQARIQTHEESS), 819–893 (RSLP…FQPI), 999–1019 (SSCFYTGDRSENNTRDPKYQR), 1033–1059 (QLERPTFVHRKPRSRNGQYPQHALKAR), and 1097–1116 (QGRFPRSASQLGRRKAKSRQ). The segment covering 747–767 (GSATEAESSENSKPKTLQARI) has biased composition (polar residues). The span at 840–850 (SRSRPEQDTNR) shows a compositional bias: basic and acidic residues. Residues 856-876 (CSSTSNLHKNRSCSSVTQTQP) are compositionally biased toward polar residues. Basic and acidic residues-rich tracts occupy residues 878–890 (KDVRSEPLSRKDF) and 1006–1017 (DRSENNTRDPKY). Positions 1097–1106 (QGRFPRSASQ) are enriched in polar residues.

It belongs to the TMC family. Detected in most neuronal organs and also in some non-neuronal tissues.

The protein localises to the membrane. Its function is as follows. Probable component of an ion channel. Molecular function hasn't been characterized yet. This chain is Transmembrane channel-like protein 3, found in Mus musculus (Mouse).